Consider the following 477-residue polypeptide: UDP-N-acetylmuramate--L-alanine ligase (477 aa).

122–128 provides a ligand contact to ATP; the sequence is GTHGKTT.

The protein belongs to the MurCDEF family.

The protein localises to the cytoplasm. The catalysed reaction is UDP-N-acetyl-alpha-D-muramate + L-alanine + ATP = UDP-N-acetyl-alpha-D-muramoyl-L-alanine + ADP + phosphate + H(+). Its pathway is cell wall biogenesis; peptidoglycan biosynthesis. In terms of biological role, cell wall formation. This Xanthomonas axonopodis pv. citri (strain 306) protein is UDP-N-acetylmuramate--L-alanine ligase.